Here is a 1056-residue protein sequence, read N- to C-terminus: Carbamoyl phosphate synthase large chain (1056 aa).

The carboxyphosphate synthetic domain stretch occupies residues 1–397 (MPRRTDIKKV…GFKKALRSID (397 aa)). ATP is bound by residues Arg-127, Arg-167, Gly-173, Gly-174, Glu-206, Val-208, Glu-213, Gly-239, Val-240, His-241, Gln-282, and Glu-294. One can recognise an ATP-grasp 1 domain in the interval 131–323 (KALMQKIGEP…IARVAAKIAI (193 aa)). Residues Gln-282, Glu-294, and Asn-296 each contribute to the Mg(2+) site. The Mn(2+) site is built by Gln-282, Glu-294, and Asn-296. The tract at residues 398-530 (TDINTHTNHN…YSTHGVTTDI (133 aa)) is oligomerization domain. The interval 531–919 (IQNDKKKVLI…YKACISADNE (389 aa)) is carbamoyl phosphate synthetic domain. Positions 661–852 (SELLDALKIP…LAKVAAKVMI (192 aa)) constitute an ATP-grasp 2 domain. ATP contacts are provided by Arg-697, Ser-736, Leu-738, Glu-743, Gly-768, Val-769, His-770, Ser-771, Gln-811, and Glu-823. Mg(2+) contacts are provided by Gln-811, Glu-823, and Asn-825. Gln-811, Glu-823, and Asn-825 together coordinate Mn(2+). Residues 918–1056 (NELPIEGNVF…PISHYLSEVE (139 aa)) enclose the MGS-like domain. The allosteric domain stretch occupies residues 920 to 1056 (LPIEGNVFIS…PISHYLSEVE (137 aa)).

It belongs to the CarB family. As to quaternary structure, composed of two chains; the small (or glutamine) chain promotes the hydrolysis of glutamine to ammonia, which is used by the large (or ammonia) chain to synthesize carbamoyl phosphate. Tetramer of heterodimers (alpha,beta)4. Requires Mg(2+) as cofactor. Mn(2+) serves as cofactor.

The catalysed reaction is hydrogencarbonate + L-glutamine + 2 ATP + H2O = carbamoyl phosphate + L-glutamate + 2 ADP + phosphate + 2 H(+). The enzyme catalyses hydrogencarbonate + NH4(+) + 2 ATP = carbamoyl phosphate + 2 ADP + phosphate + 2 H(+). It participates in amino-acid biosynthesis; L-arginine biosynthesis; carbamoyl phosphate from bicarbonate: step 1/1. The protein operates within pyrimidine metabolism; UMP biosynthesis via de novo pathway; (S)-dihydroorotate from bicarbonate: step 1/3. Its function is as follows. Large subunit of the glutamine-dependent carbamoyl phosphate synthetase (CPSase). CPSase catalyzes the formation of carbamoyl phosphate from the ammonia moiety of glutamine, carbonate, and phosphate donated by ATP, constituting the first step of 2 biosynthetic pathways, one leading to arginine and/or urea and the other to pyrimidine nucleotides. The large subunit (synthetase) binds the substrates ammonia (free or transferred from glutamine from the small subunit), hydrogencarbonate and ATP and carries out an ATP-coupled ligase reaction, activating hydrogencarbonate by forming carboxy phosphate which reacts with ammonia to form carbamoyl phosphate. This is Carbamoyl phosphate synthase large chain from Methanosphaerula palustris (strain ATCC BAA-1556 / DSM 19958 / E1-9c).